The primary structure comprises 757 residues: Glutathione biosynthesis bifunctional protein GshAB (757 aa).

The segment at 1 to 337 (MKIQHIIHEN…LGKARLAEVA (337 aa)) is glutamate--cysteine ligase. The 260-residue stretch at 494–753 (KKVLQKAGFN…LTQNVIKMLF (260 aa)) folds into the ATP-grasp domain. 521–580 (ALFENRAVVIKPKSTNYGLGITIFQQGVQNREDFAKALEIAFREDKEVMVEDYLVGTEYR) contributes to the ATP binding site. Mg(2+) contacts are provided by aspartate 702, glutamate 723, and asparagine 725. Mn(2+) contacts are provided by aspartate 702, glutamate 723, and asparagine 725.

The protein in the N-terminal section; belongs to the glutamate--cysteine ligase type 1 family. Type 2 subfamily. In terms of assembly, monomer. The cofactor is Mg(2+). It depends on Mn(2+) as a cofactor.

It catalyses the reaction L-cysteine + L-glutamate + ATP = gamma-L-glutamyl-L-cysteine + ADP + phosphate + H(+). The catalysed reaction is gamma-L-glutamyl-L-cysteine + glycine + ATP = glutathione + ADP + phosphate + H(+). It functions in the pathway sulfur metabolism; glutathione biosynthesis; glutathione from L-cysteine and L-glutamate: step 1/2. It participates in sulfur metabolism; glutathione biosynthesis; glutathione from L-cysteine and L-glutamate: step 2/2. Its function is as follows. Synthesizes glutathione from L-glutamate and L-cysteine via gamma-L-glutamyl-L-cysteine. In Pasteurella multocida (strain Pm70), this protein is Glutathione biosynthesis bifunctional protein GshAB.